The primary structure comprises 200 residues: Putative 3-methyladenine DNA glycosylase (200 aa).

The protein belongs to the DNA glycosylase MPG family.

This Rhodopseudomonas palustris (strain BisB18) protein is Putative 3-methyladenine DNA glycosylase.